An 88-amino-acid chain; its full sequence is MHEVALSVLILLAGLSALDANDPEDKNSPFYYDWHSLRVGGLICAGTPCALGIIILLSGKCKCKFSQKPSHRPGDAPPLITPGSAHDC.

A signal peptide spans 1-17; that stretch reads MHEVALSVLILLAGLSA. Over 18 to 38 the chain is Extracellular; the sequence is LDANDPEDKNSPFYYDWHSLR. The chain crosses the membrane as a helical span at residues 39 to 59; it reads VGGLICAGTPCALGIIILLSG. At 60–88 the chain is on the cytoplasmic side; sequence KCKCKFSQKPSHRPGDAPPLITPGSAHDC. Residues 66–88 are disordered; sequence SQKPSHRPGDAPPLITPGSAHDC.

Belongs to the FXYD family. As to quaternary structure, regulatory subunit of the sodium/potassium-transporting ATPase which is composed of a catalytic alpha subunit, a non-catalytic beta subunit and an additional regulatory subunit. Interacts with catalytic alpha subunit ATP1A1. Also interacts with non-catalytic beta subunit ATP1B1. Interacts with the alpha1-beta1, alpha2-beta1 and alpha3-beta1 NKA isozymes. Post-translationally, glutathionylated.

The protein localises to the cell membrane. Functionally, associates with and regulates the activity of the sodium/potassium-transporting ATPase (NKA) which transports Na(+) out of the cell and K(+) into the cell. Reduces glutathionylation of the NKA beta-1 subunit ATP1B1, thus reversing glutathionylation-mediated inhibition of ATP1B1. Induces a hyperpolarization-activated chloride current when expressed in Xenopus oocytes. In Sus scrofa (Pig), this protein is FXYD domain-containing ion transport regulator 3 (FXYD3).